Here is a 124-residue protein sequence, read N- to C-terminus: Small ribosomal subunit protein uS11 (124 aa).

The protein belongs to the universal ribosomal protein uS11 family. In terms of assembly, part of the 30S ribosomal subunit. Interacts with proteins S7 and S18. Binds to IF-3.

Located on the platform of the 30S subunit, it bridges several disparate RNA helices of the 16S rRNA. Forms part of the Shine-Dalgarno cleft in the 70S ribosome. This Anaplasma phagocytophilum (strain HZ) protein is Small ribosomal subunit protein uS11.